We begin with the raw amino-acid sequence, 326 residues long: Adenine deaminase (326 aa).

Residues H14, H16, and H194 each contribute to the Zn(2+) site. Residue E197 is the Proton donor of the active site. D275 provides a ligand contact to Zn(2+). D276 contacts substrate.

Belongs to the metallo-dependent hydrolases superfamily. Adenosine and AMP deaminases family. Adenine deaminase type 2 subfamily. Zn(2+) serves as cofactor.

The enzyme catalyses adenine + H2O + H(+) = hypoxanthine + NH4(+). Functionally, catalyzes the hydrolytic deamination of adenine to hypoxanthine. Plays an important role in the purine salvage pathway and in nitrogen catabolism. This chain is Adenine deaminase, found in Crocosphaera subtropica (strain ATCC 51142 / BH68) (Cyanothece sp. (strain ATCC 51142)).